A 298-amino-acid polypeptide reads, in one-letter code: ATP synthase gamma chain (298 aa).

It belongs to the ATPase gamma chain family. In terms of assembly, F-type ATPases have 2 components, CF(1) - the catalytic core - and CF(0) - the membrane proton channel. CF(1) has five subunits: alpha(3), beta(3), gamma(1), delta(1), epsilon(1). CF(0) has three main subunits: a, b and c.

It localises to the cell inner membrane. Its function is as follows. Produces ATP from ADP in the presence of a proton gradient across the membrane. The gamma chain is believed to be important in regulating ATPase activity and the flow of protons through the CF(0) complex. This is ATP synthase gamma chain from Acidithiobacillus ferridurans.